A 455-amino-acid polypeptide reads, in one-letter code: Guanine/hypoxanthine permease GhxQ (455 aa).

Over 1 to 31 (MSGDILQTPDAPKPQGALDNYFKITARGSTV) the chain is Cytoplasmic. The chain crosses the membrane as a helical span at residues 32 to 55 (RQEVLAGLTTFLAMVYSVIVVPGM). The Periplasmic segment spans residues 56–65 (LGKAGFPPAA). A helical transmembrane segment spans residues 66 to 84 (VFVATCLVAGFGSLLMGLW). Topologically, residues 85–86 (AN) are cytoplasmic. The discontinuously helical transmembrane segment at 87 to 103 (LPMAIGCAISLTAFTAF) threads the bilayer. Topologically, residues 104-115 (SLVLGQQISVPV) are periplasmic. A helical transmembrane segment spans residues 116–135 (ALGAVFLMGVIFTAISVTGV). Over 136–147 (RTWILRNLPMGI) the chain is Cytoplasmic. The chain crosses the membrane as a helical span at residues 148-168 (AHGTGIGIGLFLLLIAANGVG). Residues 169 to 186 (MVIKNPIEGLPVALGAFT) are Periplasmic-facing. A helical transmembrane segment spans residues 187–204 (SFPVMMSLLGLAVIFGLE). Residues 205 to 208 (KCRV) lie on the Cytoplasmic side of the membrane. A helical membrane pass occupies residues 209-228 (PGGILLVIIAISIIGLIFDP). Residues 229–260 (AVKYHGLVAMPSLTGEDGKSLIFSLDIMGALQ) are Periplasmic-facing. The chain crosses the membrane as a helical span at residues 261–289 (PTVLPSVLALVMTAVFDATGTIRAVAGQA). Topologically, residues 290 to 302 (NLLDKDNQIINGG) are cytoplasmic. Residues 303–318 (KALTSDSVSSIFSGLV) traverse the membrane as a helical segment. Residues 319–320 (GA) are Periplasmic-facing. Residues 321–336 (APAAVYIESAAGTAAG) traverse the membrane as a discontinuously helical segment. Residues 337–340 (GKTG) are Cytoplasmic-facing. Residues 341 to 355 (LTATVVGALFLLILF) form a helical membrane-spanning segment. The Periplasmic segment spans residues 356–366 (LSPLSFLIPGY). The helical transmembrane segment at 367 to 386 (ATAPALMYVGLLMLSNVSKL) threads the bilayer. Residues 387-391 (DFNDF) lie on the Cytoplasmic side of the membrane. Positions 392–427 (IDAMAGLVCAVFIVLTCNIVTGIMLGFVTLVVGRVF) form an intramembrane region, discontinuously helical. The Cytoplasmic segment spans residues 428 to 455 (AREWQKLNIGTVIITAALVAFYAGGWAI).

This sequence belongs to the nucleobase:cation symporter-2 (NCS2) (TC 2.A.40) family. Azg-like subfamily.

The protein resides in the cell membrane. In terms of biological role, high-affinity transporter for guanine and hypoxanthine. This chain is Guanine/hypoxanthine permease GhxQ (ghxQ), found in Escherichia coli (strain K12).